The primary structure comprises 246 residues: tRNA (guanine-N(1)-)-methyltransferase (246 aa).

Residues Gly-113 and 133 to 138 (IGDYVL) each bind S-adenosyl-L-methionine.

This sequence belongs to the RNA methyltransferase TrmD family. In terms of assembly, homodimer.

The protein localises to the cytoplasm. It catalyses the reaction guanosine(37) in tRNA + S-adenosyl-L-methionine = N(1)-methylguanosine(37) in tRNA + S-adenosyl-L-homocysteine + H(+). Specifically methylates guanosine-37 in various tRNAs. In Yersinia enterocolitica serotype O:8 / biotype 1B (strain NCTC 13174 / 8081), this protein is tRNA (guanine-N(1)-)-methyltransferase.